A 1286-amino-acid polypeptide reads, in one-letter code: ABC transporter B family member 1 (1286 aa).

2 helical membrane-spanning segments follow: residues 42 to 62 (VLMGIGSVGAFVHGCSLPLFL) and 93 to 113 (FLVVGAAIWASSWAEISCWMW). The ABC transmembrane type-1 1 domain occupies 44 to 333 (MGIGSVGAFV…SAPSMAAFAK (290 aa)). Residue Asp139 participates in ATP binding. 2 helical membrane passes run 166–186 (LGNFIHYMATFVSGFIVGFTA) and 187–207 (VWQLALVTLAVVPLIAVIGGI). Residue Asn217 is glycosylated (N-linked (GlcNAc...) asparagine). The next 2 helical transmembrane spans lie at 277 to 297 (ATYFVVFCCYALLLWYGGYLV) and 301 to 321 (LTNGGLAIATMFAVMIGGLAL). Tyr286 contacts brassinolide. The ABC transporter 1 domain occupies 368 to 604 (VELKNVDFSY…GENGVYAKLI (237 aa)). Tyr377, Ser379, Arg380, Gly408, Lys409, Ser410, and Thr411 together coordinate ATP. The interval 614 to 647 (AMSNARKSSARPSSARNSVSSPIMTRNSSYGRSP) is disordered. Low complexity predominate over residues 616-635 (SNARKSSARPSSARNSVSSP). Asn640 carries an N-linked (GlcNAc...) asparagine glycan. Residues 700–988 (ALLGSVGSVI…TLTLAPDFIK (289 aa)) enclose the ABC transmembrane type-1 2 domain. 2 helical membrane-spanning segments follow: residues 705–725 (VGSVICGSLSAFFAYVLSAVL) and 745–765 (YLLIGLSSAALVFNTLQHSFW). N-linked (GlcNAc...) asparagine glycosylation is present at Asn771. An ATP-binding site is contributed by Asp793. An N-linked (GlcNAc...) asparagine glycan is attached at Asn797. 4 consecutive transmembrane segments (helical) span residues 821-843 (ISVIVQNTALMLVACTAGFVLQW), 845-867 (LALVLVAVFPVVVAATVLQKMFM), 932-952 (VAQFCLYASYALGLWYASWLV), and 967-987 (MVLMVSANGAAETLTLAPDFI). Residues Tyr941 and Glu978 each contribute to the brassinolide site. Residues 1024-1260 (VELKHIDFSY…HPDGIYARMI (237 aa)) form the ABC transporter 2 domain. Residues Tyr1033, Arg1036, Gly1064, Lys1065, and Ser1066 each coordinate ATP. The interaction with FKBP42/TWD1 stretch occupies residues 1049 to 1286 (ARAGKTLALV…SSSRVKEDDA (238 aa)).

It belongs to the ABC transporter superfamily. ABCB family. Multidrug resistance exporter (TC 3.A.1.201) subfamily. In terms of assembly, interacts with 1-naphthylphthalamic acid (NPA) and FKBP42/TWD1. As to expression, ubiquitous, with high levels in peduncles. Mostly localized in young developing tissues, including meristems, as well as root and shoot apices.

It is found in the cell membrane. It catalyses the reaction (indol-3-yl)acetate(in) + ATP + H2O = (indol-3-yl)acetate(out) + ADP + phosphate + H(+). The catalysed reaction is brassinolide(in) + ATP + H2O = brassinolide(out) + ADP + phosphate + H(+). The enzyme catalyses 24-epi-brassinolide(in) + ATP + H2O = 24-epi-brassinolide(out) + ADP + phosphate + H(+). It carries out the reaction 24-epi-castasterone(in) + ATP + H2O = 24-epi-castasterone(out) + ADP + phosphate + H(+). It catalyses the reaction castasterone(in) + ATP + H2O = castasterone(out) + ADP + phosphate + H(+). Transport capacity is stimulated by the chaperone protein FKBP42/TWD1. Transport activity inhibited by 1-N-naphthylphthalamic acid (NPA), cyclopropyl propane dione (CPD), cyclosporin A, verapamil and quercetin. ATPase activity is specifically activated by bioactive brassinosteroids in a dose-dependent manner, including brassinolide (BL), 24-epiBL, 24-epicastasterone (24-epiCS) and castasterone-alkyne; BL binding leads to structural changes. Inhibited by vanadate. Its function is as follows. Brassinosteroid exporter that, in conjunction with ABCB19, supports the accumulation of exogenous brassinosteroids (BR) in the apoplast, thus promoting BR signaling initiation involving the specific receptor BRI1 and required for plant growth and stress responses. Auxin efflux transporter that acts as a negative regulator of light signaling to promote hypocotyl elongation. May contribute to the regulation of leaf position and morphology during PHOT1-mediated blue light responses involving auxin distribution, especially in low light fluence. Together with ABCB19 and in a FKBP42/TWD1-dependent manner, supports seed development by promoting stamen elongation and, to a lesser extent, anther dehiscence and pollen maturation, probably as auxin transporters. Mediates the accumulation of chlorophyll and anthocyanin, as well as the expression of genes in response to light. Participates directly in auxin efflux and thus regulates the polar (presumably basipetal) auxin transport (from root tips to root elongating zone). Also transports some auxin metabolites such as oxindoleacetic acid and indoleacetaldehyde. Involved in diverse auxin-mediated responses including gravitropism, phototropism and lateral root formation. Confers resistance to herbicides such as dicamba, pendimethalin, oryzalin, and monosodium acid methanearsonate (MSMA), but not to herbicides such as glyphosate, atrazine, bentazon and fluazifop-p-butyl. Also mediates resistance to xenobiotics such as cycloheximide and the cytokinin N6-(2-isopentenyl)adenine (2IP). The chain is ABC transporter B family member 1 from Arabidopsis thaliana (Mouse-ear cress).